Here is an 859-residue protein sequence, read N- to C-terminus: Paladin (859 aa).

The tract at residues 1–34 (MGTTASTAQQTVSAGTSLEGLQGGSSSSMDSQHS) is disordered. Glycine 2 is lipidated: N-myristoyl glycine. Serine 89 carries the post-translational modification Phosphoserine.

Belongs to the paladin family. In terms of tissue distribution, vascular expression detected in the central nervous system, kidney, lung, heart, skeletal muscle, white adipose tissue (WAT), brown adipose tissue, liver, pancreas and spleen. Not expressed in all vessels: for instance, not expressed in capillaries in the brain, and expressed mainly in large vessels in the heart, WAT, liver, pancreas and kidney. Predominant nonvascular expression in myocardium and lung mesenchyme. In large vessels, primarily expressed by smooth muscle cells, but occasionally detected at low levels in the endothelium. Expressed in various cells of the hematopoietic lineage.

Its subcellular location is the cytoplasm. The protein resides in the cytosol. This chain is Paladin (Pald1), found in Mus musculus (Mouse).